Consider the following 218-residue polypeptide: Small ribosomal subunit protein uS3c (218 aa).

A KH type-2 domain is found at 47–118; it reads VQKNMRTSSG…KLNIAVTRIA (72 aa).

It belongs to the universal ribosomal protein uS3 family. As to quaternary structure, part of the 30S ribosomal subunit.

It is found in the plastid. It localises to the chloroplast. The polypeptide is Small ribosomal subunit protein uS3c (rps3) (Nicotiana tomentosiformis (Tobacco)).